The sequence spans 258 residues: Spindlin-3 (258 aa).

The segment at 1-23 is disordered; the sequence is MKTPFGKAAAGQRSRTGAGHGSV. Tudor-like domain regions lie at residues 50–99, 129–178, and 210–255; these read VGCR…LELH, VGKA…YQLL, and VGKQ…YDLV. Histone H3K4me3 and H3R8me2a binding stretches follow at residues E138 and 246-248; that span reads DFH.

The protein belongs to the SPIN/STSY family. In terms of assembly, interacts with C11orf84/SPINDOC.

Its function is as follows. Exhibits H3K4me3-binding activity. The polypeptide is Spindlin-3 (SPIN3) (Pongo abelii (Sumatran orangutan)).